The primary structure comprises 257 residues: NAD-capped RNA hydrolase NudC (257 aa).

Substrate-binding residues include lysine 27 and arginine 71. Positions 100 and 103 each coordinate Zn(2+). Glutamate 113 contributes to the substrate binding site. Zn(2+) is bound by residues cysteine 118 and cysteine 121. Tyrosine 126 contacts substrate. Residues 127 to 251 form the Nudix hydrolase domain; it reads PQIAPCIIVG…IARRLIEDTI (125 aa). 3 residues coordinate a divalent metal cation: alanine 160, glutamate 176, and glutamate 180. Residues 161-182 carry the Nudix box motif; it reads GFVEVGETLEEAVVREVMEESN. Position 194–201 (194–201) interacts with substrate; sequence QPWPFPHS. Position 221 (glutamate 221) interacts with a divalent metal cation. Substrate is bound at residue alanine 243.

Belongs to the Nudix hydrolase family. NudC subfamily. In terms of assembly, homodimer. It depends on Mg(2+) as a cofactor. Requires Mn(2+) as cofactor. The cofactor is Zn(2+).

It carries out the reaction a 5'-end NAD(+)-phospho-ribonucleoside in mRNA + H2O = a 5'-end phospho-adenosine-phospho-ribonucleoside in mRNA + beta-nicotinamide D-ribonucleotide + 2 H(+). The catalysed reaction is NAD(+) + H2O = beta-nicotinamide D-ribonucleotide + AMP + 2 H(+). It catalyses the reaction NADH + H2O = reduced beta-nicotinamide D-ribonucleotide + AMP + 2 H(+). Functionally, mRNA decapping enzyme that specifically removes the nicotinamide adenine dinucleotide (NAD) cap from a subset of mRNAs by hydrolyzing the diphosphate linkage to produce nicotinamide mononucleotide (NMN) and 5' monophosphate mRNA. The NAD-cap is present at the 5'-end of some mRNAs and stabilizes RNA against 5'-processing. Has preference for mRNAs with a 5'-end purine. Catalyzes the hydrolysis of a broad range of dinucleotide pyrophosphates. This is NAD-capped RNA hydrolase NudC from Photorhabdus laumondii subsp. laumondii (strain DSM 15139 / CIP 105565 / TT01) (Photorhabdus luminescens subsp. laumondii).